The sequence spans 442 residues: HTH-type transcriptional regulator NorG (442 aa).

The region spanning Lys-2–Tyr-46 is the HTH gntR-type domain. Residues Gln-6–Glu-25 constitute a DNA-binding region (H-T-H motif). An N6-(pyridoxal phosphate)lysine modification is found at Lys-288.

It in the C-terminal section; belongs to the class-I pyridoxal-phosphate-dependent aminotransferase family. The cofactor is pyridoxal 5'-phosphate.

Functionally, positively regulates the expression of the NorB efflux pump and negatively regulates the expression of the AbcA efflux pump. Binds specifically to the promoters of norA, norB and norC and abcA genes. Could also have an aminotransferase activity. In Staphylococcus aureus (strain Mu50 / ATCC 700699), this protein is HTH-type transcriptional regulator NorG (norG).